The following is a 422-amino-acid chain: WD repeat and SOCS box-containing protein 1 (422 aa).

WD repeat units follow at residues 124–165 (SRCV…LLLN), 168–208 (DHTE…NMMK), 212–251 (GHQN…MIRK), 254–293 (GHYN…ILFE), and 309–346 (DNGR…SYPV). In terms of domain architecture, SOCS box spans 374 to 422 (NAYFWSTPKYVSSLQHLCRMAIRRVMNTNEVKKLPIPQKIMEFLTYQTM).

In terms of assembly, component of a probable ECS E3 ubiquitin-protein ligase complex that contains the Elongin BC complex.

The protein operates within protein modification; protein ubiquitination. Probable substrate-recognition component of a SCF-like ECS (Elongin-Cullin-SOCS-box protein) E3 ubiquitin-protein ligase complex which mediates the ubiquitination and subsequent proteasomal degradation of target proteins. This is WD repeat and SOCS box-containing protein 1 (wsb1) from Xenopus tropicalis (Western clawed frog).